A 100-amino-acid polypeptide reads, in one-letter code: Small ribosomal subunit protein uS14c (100 aa).

It belongs to the universal ribosomal protein uS14 family. As to quaternary structure, part of the 30S ribosomal subunit.

The protein localises to the plastid. The protein resides in the chloroplast. Functionally, binds 16S rRNA, required for the assembly of 30S particles. The protein is Small ribosomal subunit protein uS14c of Populus alba (White poplar).